Here is a 92-residue protein sequence, read N- to C-terminus: MIAEFESRILALIDGMVDHASDDELFASGYLRGHLTLAIAELESGDDHSAQAVHTTVSQSLEKAIGAGELSPRDQALVTDMWENLFQQASQQ.

This is an uncharacterized protein from Escherichia coli (strain K12).